The chain runs to 333 residues: D-fructose 1,6-bisphosphatase class 2/sedoheptulose 1,7-bisphosphatase (333 aa).

Mn(2+)-binding residues include Asp33, Glu57, Asp85, and Glu88. Residues 88 to 90 (EGT), Tyr119, 164 to 166 (RTR), and 186 to 188 (DGD) each bind substrate. Glu213 serves as a coordination point for Mn(2+).

This sequence belongs to the FBPase class 2 family. As to quaternary structure, homotetramer. Mn(2+) serves as cofactor.

The catalysed reaction is beta-D-fructose 1,6-bisphosphate + H2O = beta-D-fructose 6-phosphate + phosphate. The enzyme catalyses D-sedoheptulose 1,7-bisphosphate + H2O = D-sedoheptulose 7-phosphate + phosphate. Its pathway is carbohydrate biosynthesis; Calvin cycle. Catalyzes the hydrolysis of fructose 1,6-bisphosphate (Fru 1,6-P2) and sedoheptulose 1,7-bisphosphate (Sed 1,7-P2) to fructose 6-phosphate and sedoheptulose 7-phosphate, respectively. In Prochlorococcus marinus (strain AS9601), this protein is D-fructose 1,6-bisphosphatase class 2/sedoheptulose 1,7-bisphosphatase.